The chain runs to 421 residues: Enolase (421 aa).

E207 serves as the catalytic Proton donor. Positions 244, 285, and 312 each coordinate Mg(2+). Catalysis depends on K337, which acts as the Proton acceptor. (2R)-2-phosphoglycerate is bound by residues K337, R366, S367, and K388.

This sequence belongs to the enolase family. The cofactor is Mg(2+).

Its subcellular location is the cytoplasm. The protein localises to the secreted. It localises to the cell surface. The enzyme catalyses (2R)-2-phosphoglycerate = phosphoenolpyruvate + H2O. Its pathway is carbohydrate degradation; glycolysis; pyruvate from D-glyceraldehyde 3-phosphate: step 4/5. Functionally, catalyzes the reversible conversion of 2-phosphoglycerate (2-PG) into phosphoenolpyruvate (PEP). It is essential for the degradation of carbohydrates via glycolysis. This Ehrlichia ruminantium (strain Gardel) protein is Enolase.